The following is a 335-amino-acid chain: Tetraacyldisaccharide 4'-kinase (335 aa).

59 to 66 (TAGGNGKT) contributes to the ATP binding site.

This sequence belongs to the LpxK family.

The catalysed reaction is a lipid A disaccharide + ATP = a lipid IVA + ADP + H(+). The protein operates within glycolipid biosynthesis; lipid IV(A) biosynthesis; lipid IV(A) from (3R)-3-hydroxytetradecanoyl-[acyl-carrier-protein] and UDP-N-acetyl-alpha-D-glucosamine: step 6/6. In terms of biological role, transfers the gamma-phosphate of ATP to the 4'-position of a tetraacyldisaccharide 1-phosphate intermediate (termed DS-1-P) to form tetraacyldisaccharide 1,4'-bis-phosphate (lipid IVA). This is Tetraacyldisaccharide 4'-kinase from Vibrio cholerae serotype O1 (strain ATCC 39541 / Classical Ogawa 395 / O395).